The chain runs to 162 residues: Ribosome-binding factor A (162 aa).

The interval 124–162 (ARVRSGAKPAGEADPYRESGSGVEPGRDGSIGDDDQPEY) is disordered.

This sequence belongs to the RbfA family. Monomer. Binds 30S ribosomal subunits, but not 50S ribosomal subunits or 70S ribosomes.

It localises to the cytoplasm. One of several proteins that assist in the late maturation steps of the functional core of the 30S ribosomal subunit. Associates with free 30S ribosomal subunits (but not with 30S subunits that are part of 70S ribosomes or polysomes). Required for efficient processing of 16S rRNA. May interact with the 5'-terminal helix region of 16S rRNA. The protein is Ribosome-binding factor A of Mycolicibacterium paratuberculosis (strain ATCC BAA-968 / K-10) (Mycobacterium paratuberculosis).